A 258-amino-acid polypeptide reads, in one-letter code: Regulatory protein RecX (258 aa).

It belongs to the RecX family.

The protein localises to the cytoplasm. Its function is as follows. Modulates RecA activity. This chain is Regulatory protein RecX, found in Streptococcus pyogenes serotype M3 (strain ATCC BAA-595 / MGAS315).